The following is a 268-amino-acid chain: Tryptophan synthase alpha chain (268 aa).

Active-site proton acceptor residues include Glu49 and Asp60.

The protein belongs to the TrpA family. Tetramer of two alpha and two beta chains.

The catalysed reaction is (1S,2R)-1-C-(indol-3-yl)glycerol 3-phosphate + L-serine = D-glyceraldehyde 3-phosphate + L-tryptophan + H2O. Its pathway is amino-acid biosynthesis; L-tryptophan biosynthesis; L-tryptophan from chorismate: step 5/5. In terms of biological role, the alpha subunit is responsible for the aldol cleavage of indoleglycerol phosphate to indole and glyceraldehyde 3-phosphate. The chain is Tryptophan synthase alpha chain from Escherichia coli (strain SE11).